A 453-amino-acid chain; its full sequence is Phosphoglucosamine mutase (453 aa).

Ser102 (phosphoserine intermediate) is an active-site residue. Residues Ser102, Asp244, Asp246, and Asp248 each contribute to the Mg(2+) site. Ser102 is modified (phosphoserine).

Belongs to the phosphohexose mutase family. Requires Mg(2+) as cofactor. In terms of processing, activated by phosphorylation.

It carries out the reaction alpha-D-glucosamine 1-phosphate = D-glucosamine 6-phosphate. Its function is as follows. Catalyzes the conversion of glucosamine-6-phosphate to glucosamine-1-phosphate. The sequence is that of Phosphoglucosamine mutase from Pelobacter propionicus (strain DSM 2379 / NBRC 103807 / OttBd1).